The chain runs to 124 residues: Fluoride-specific ion channel FluC (124 aa).

4 helical membrane passes run Met-1–Asn-21, Thr-36–Phe-56, Leu-66–Ala-86, and Ala-94–Phe-114. Na(+) is bound by residues Gly-74 and Thr-77.

Belongs to the fluoride channel Fluc/FEX (TC 1.A.43) family.

The protein localises to the cell inner membrane. It catalyses the reaction fluoride(in) = fluoride(out). Na(+) is not transported, but it plays an essential structural role and its presence is essential for fluoride channel function. Fluoride-specific ion channel. Important for reducing fluoride concentration in the cell, thus reducing its toxicity. This chain is Fluoride-specific ion channel FluC, found in Rhodopseudomonas palustris (strain ATCC BAA-98 / CGA009).